The chain runs to 420 residues: Putative U-box domain-containing protein 58 (420 aa).

In terms of domain architecture, MIF4G spans 4–168 (NSYVLFARLC…EDALAMKKED (165 aa)). Positions 139-352 (SRVVELEGNY…TAKEQMEKRQ (214 aa)) form a coiled coil. The region spanning 352-420 (QPPSSFFCPI…ALRSAIEELV (69 aa)) is the U-box domain.

The enzyme catalyses S-ubiquitinyl-[E2 ubiquitin-conjugating enzyme]-L-cysteine + [acceptor protein]-L-lysine = [E2 ubiquitin-conjugating enzyme]-L-cysteine + N(6)-ubiquitinyl-[acceptor protein]-L-lysine.. It participates in protein modification; protein ubiquitination. Functionally, functions as an E3 ubiquitin ligase. The sequence is that of Putative U-box domain-containing protein 58 (PUB58) from Arabidopsis thaliana (Mouse-ear cress).